The primary structure comprises 64 residues: MLIIPIKDGENIDRALKRYKRKFDKTGTVRQLRARTAFIKPSVVKRAQIQKAAYIQTLKDSLES.

Belongs to the bacterial ribosomal protein bS21 family.

In Flavobacterium johnsoniae (strain ATCC 17061 / DSM 2064 / JCM 8514 / BCRC 14874 / CCUG 350202 / NBRC 14942 / NCIMB 11054 / UW101) (Cytophaga johnsonae), this protein is Small ribosomal subunit protein bS21.